The sequence spans 262 residues: Global transcriptional regulator CodY (262 aa).

A GAF domain region spans residues 1–159; it reads MAHLLEKTRK…ASTVVGIQLL (159 aa). Residues 207–226 constitute a DNA-binding region (H-T-H motif); it reads ASVIADRIGITRSVIVNALR.

This sequence belongs to the CodY family.

The protein localises to the cytoplasm. DNA-binding global transcriptional regulator which is involved in the adaptive response to starvation and acts by directly or indirectly controlling the expression of numerous genes in response to nutrient availability. During rapid exponential growth, CodY is highly active and represses genes whose products allow adaptation to nutrient depletion. The polypeptide is Global transcriptional regulator CodY (Streptococcus pneumoniae (strain JJA)).